Consider the following 163-residue polypeptide: MCKEVIMSQKIIDLVTAVVAPAIPDPYELVDIEYEKIGSDYILSVLIDKPGGITVEDTADLTEIISPLLDTIQPDPFPDQYMLEVSSPGLERPLKTKEALKNAVGQYINVSLYKAIDKIKIFQGDLLAFDGETLTIDYLDKTRHKTVEIPYQTVAKARLAVKL.

This sequence belongs to the RimP family.

The protein resides in the cytoplasm. Required for maturation of 30S ribosomal subunits. The sequence is that of Ribosome maturation factor RimP from Streptococcus thermophilus (strain CNRZ 1066).